An 854-amino-acid chain; its full sequence is DNA mismatch repair protein MutS (854 aa).

615 to 622 (GPNMGGKS) contributes to the ATP binding site.

This sequence belongs to the DNA mismatch repair MutS family.

Its function is as follows. This protein is involved in the repair of mismatches in DNA. It is possible that it carries out the mismatch recognition step. This protein has a weak ATPase activity. This is DNA mismatch repair protein MutS from Proteus mirabilis (strain HI4320).